Consider the following 644-residue polypeptide: 1-deoxy-D-xylulose-5-phosphate synthase (644 aa).

Residues histidine 84 and 125–127 (GHS) each bind thiamine diphosphate. Mg(2+) is bound at residue aspartate 156. Thiamine diphosphate is bound by residues 157 to 158 (GA), asparagine 185, tyrosine 296, and glutamate 378. Asparagine 185 serves as a coordination point for Mg(2+).

The protein belongs to the transketolase family. DXPS subfamily. In terms of assembly, homodimer. It depends on Mg(2+) as a cofactor. The cofactor is thiamine diphosphate.

It carries out the reaction D-glyceraldehyde 3-phosphate + pyruvate + H(+) = 1-deoxy-D-xylulose 5-phosphate + CO2. Its pathway is metabolic intermediate biosynthesis; 1-deoxy-D-xylulose 5-phosphate biosynthesis; 1-deoxy-D-xylulose 5-phosphate from D-glyceraldehyde 3-phosphate and pyruvate: step 1/1. Functionally, catalyzes the acyloin condensation reaction between C atoms 2 and 3 of pyruvate and glyceraldehyde 3-phosphate to yield 1-deoxy-D-xylulose-5-phosphate (DXP). The chain is 1-deoxy-D-xylulose-5-phosphate synthase from Paramagnetospirillum magneticum (strain ATCC 700264 / AMB-1) (Magnetospirillum magneticum).